The sequence spans 426 residues: Glutamate-1-semialdehyde 2,1-aminomutase (426 aa).

K265 is modified (N6-(pyridoxal phosphate)lysine).

It belongs to the class-III pyridoxal-phosphate-dependent aminotransferase family. HemL subfamily. In terms of assembly, homodimer. The cofactor is pyridoxal 5'-phosphate.

Its subcellular location is the cytoplasm. It carries out the reaction (S)-4-amino-5-oxopentanoate = 5-aminolevulinate. It functions in the pathway porphyrin-containing compound metabolism; protoporphyrin-IX biosynthesis; 5-aminolevulinate from L-glutamyl-tRNA(Glu): step 2/2. This Neisseria gonorrhoeae (strain ATCC 700825 / FA 1090) protein is Glutamate-1-semialdehyde 2,1-aminomutase.